The chain runs to 77 residues: Large ribosomal subunit protein bL28 (77 aa).

The protein belongs to the bacterial ribosomal protein bL28 family.

The polypeptide is Large ribosomal subunit protein bL28 (Polynucleobacter necessarius subsp. necessarius (strain STIR1)).